Consider the following 239-residue polypeptide: 1-(5-phosphoribosyl)-5-[(5-phosphoribosylamino)methylideneamino] imidazole-4-carboxamide isomerase (239 aa).

The active-site Proton acceptor is D8. D129 acts as the Proton donor in catalysis.

Belongs to the HisA/HisF family.

The protein localises to the cytoplasm. The catalysed reaction is 1-(5-phospho-beta-D-ribosyl)-5-[(5-phospho-beta-D-ribosylamino)methylideneamino]imidazole-4-carboxamide = 5-[(5-phospho-1-deoxy-D-ribulos-1-ylimino)methylamino]-1-(5-phospho-beta-D-ribosyl)imidazole-4-carboxamide. Its pathway is amino-acid biosynthesis; L-histidine biosynthesis; L-histidine from 5-phospho-alpha-D-ribose 1-diphosphate: step 4/9. The chain is 1-(5-phosphoribosyl)-5-[(5-phosphoribosylamino)methylideneamino] imidazole-4-carboxamide isomerase from Bacillus thuringiensis (strain Al Hakam).